The following is a 1030-amino-acid chain: E3 ubiquitin-protein ligase mib1 (1030 aa).

The MIB/HERC2 1 domain occupies 6–74 (NNRVMMEGVG…AYDVRILDSA (69 aa)). A ZZ-type zinc finger spans residues 80–132 (HDGTMCDTCRQQPIIGIRWKCAECTNYDLCTTCYHGDKHHLRHRFYRITTPGS). Cys85, Cys88, Cys100, Cys103, Cys109, Cys112, His118, and His122 together coordinate Zn(2+). One can recognise an MIB/HERC2 2 domain in the interval 143–221 (SKKITARGIF…MSDLKCVQDA (79 aa)). 9 ANK repeats span residues 430 to 460 (DINEELVKAAANGDLAKVEDILKRPDVDVNG), 463 to 492 (AGHTAMQAASQNGHVDVLKLLLKHSVDLEA), 496 to 525 (DGDRAVHHASFGDEGSVIEVLHRGGADLNA), 529 to 558 (RRQTPLHIAVNKGHLQVVKTLLDFGCHPSL), 562 to 591 (EGDTPLHDAISKKRDDMLSVLLEAGADVTI), 595 to 627 (NGFNALHHAALRGNPSAMRVLLSKLPRPWIVDE), 631 to 661 (DGYTALHLAALNNHVEVAELLVHQGNANLDV), 665 to 694 (NQQTALHLAVERQHTQIVRLLVRAEAKLDV), and 698 to 727 (DGDTPLHEALRHHTLSQLRQLQDMQDVSKV). RING-type zinc fingers lie at residues 817 to 852 (CMVCSDMKRDTLFGPCGHIATCSLCSPRVKKCLICK) and 864 to 899 (CVVCSDKKAAVLFQPCGHMCACENCASLMKKCVQCR). A coiled-coil region spans residues 957-986 (ALQRDKDNTNVNADVQKLQQQLQDIKEQTM). The RING-type 3 zinc finger occupies 987-1020 (CPVCLDRLKNMIFMCGHGTCQLCGDRMSECPICR).

In terms of assembly, interacts with deltaA (dla) and deltaD (dld).

The protein localises to the cytoplasm. It is found in the cytoskeleton. It localises to the microtubule organizing center. The protein resides in the centrosome. Its subcellular location is the centriolar satellite. The protein localises to the cell membrane. It catalyses the reaction S-ubiquitinyl-[E2 ubiquitin-conjugating enzyme]-L-cysteine + [acceptor protein]-L-lysine = [E2 ubiquitin-conjugating enzyme]-L-cysteine + N(6)-ubiquitinyl-[acceptor protein]-L-lysine.. It functions in the pathway protein modification; protein ubiquitination. Its function is as follows. E3 ubiquitin-protein ligase that mediates ubiquitination of Delta receptors, which act as ligands of Notch proteins. Positively regulates the Delta-mediated Notch signaling by ubiquitinating the intracellular domain of Delta, leading to endocytosis of Delta receptors. It thereby participates in many processes regulated by the Notch signaling pathway, such as midline cell fate specification prior to germ layer formation, patterning of sensory cell differentiation in the ear, neurogenesis of the hindbrain and commitment to a secretory fate in the intestine. Essential for early embryonic development. The polypeptide is E3 ubiquitin-protein ligase mib1 (mib1) (Danio rerio (Zebrafish)).